Here is a 227-residue protein sequence, read N- to C-terminus: Cytochrome c oxidase subunit 2 (227 aa).

Over 1–14 (MAHPVQLGFQDAAS) the chain is Mitochondrial intermembrane. A helical transmembrane segment spans residues 15–45 (PIMEELLYFHDHTLMIMFLISSLVLYIISLM). Residues 46 to 59 (LTTKLTHTSTMDAQ) lie on the Mitochondrial matrix side of the membrane. A helical membrane pass occupies residues 60-87 (EVETVWTILPAAILILIALPSLRILYMM). Residues 88–227 (DEITSPSLTL…HFEEWLLFTL (140 aa)) lie on the Mitochondrial intermembrane side of the membrane. 6 residues coordinate Cu cation: histidine 161, cysteine 196, glutamate 198, cysteine 200, histidine 204, and methionine 207. Glutamate 198 is a binding site for Mg(2+).

This sequence belongs to the cytochrome c oxidase subunit 2 family. As to quaternary structure, component of the cytochrome c oxidase (complex IV, CIV), a multisubunit enzyme composed of 14 subunits. The complex is composed of a catalytic core of 3 subunits MT-CO1, MT-CO2 and MT-CO3, encoded in the mitochondrial DNA, and 11 supernumerary subunits COX4I, COX5A, COX5B, COX6A, COX6B, COX6C, COX7A, COX7B, COX7C, COX8 and NDUFA4, which are encoded in the nuclear genome. The complex exists as a monomer or a dimer and forms supercomplexes (SCs) in the inner mitochondrial membrane with NADH-ubiquinone oxidoreductase (complex I, CI) and ubiquinol-cytochrome c oxidoreductase (cytochrome b-c1 complex, complex III, CIII), resulting in different assemblies (supercomplex SCI(1)III(2)IV(1) and megacomplex MCI(2)III(2)IV(2)). Found in a complex with TMEM177, COA6, COX18, COX20, SCO1 and SCO2. Interacts with TMEM177 in a COX20-dependent manner. Interacts with COX20. Interacts with COX16. Requires Cu cation as cofactor.

The protein resides in the mitochondrion inner membrane. It catalyses the reaction 4 Fe(II)-[cytochrome c] + O2 + 8 H(+)(in) = 4 Fe(III)-[cytochrome c] + 2 H2O + 4 H(+)(out). Its function is as follows. Component of the cytochrome c oxidase, the last enzyme in the mitochondrial electron transport chain which drives oxidative phosphorylation. The respiratory chain contains 3 multisubunit complexes succinate dehydrogenase (complex II, CII), ubiquinol-cytochrome c oxidoreductase (cytochrome b-c1 complex, complex III, CIII) and cytochrome c oxidase (complex IV, CIV), that cooperate to transfer electrons derived from NADH and succinate to molecular oxygen, creating an electrochemical gradient over the inner membrane that drives transmembrane transport and the ATP synthase. Cytochrome c oxidase is the component of the respiratory chain that catalyzes the reduction of oxygen to water. Electrons originating from reduced cytochrome c in the intermembrane space (IMS) are transferred via the dinuclear copper A center (CU(A)) of subunit 2 and heme A of subunit 1 to the active site in subunit 1, a binuclear center (BNC) formed by heme A3 and copper B (CU(B)). The BNC reduces molecular oxygen to 2 water molecules using 4 electrons from cytochrome c in the IMS and 4 protons from the mitochondrial matrix. This chain is Cytochrome c oxidase subunit 2 (MT-CO2), found in Varecia variegata (Black-and-white ruffed lemur).